Here is a 3130-residue protein sequence, read N- to C-terminus: DNA polymerase zeta catalytic subunit (3130 aa).

6 disordered regions span residues 263–295 (AIWE…VPAT), 425–457 (GYRG…NEPQ), 487–510 (LCRN…MEWS), 524–548 (LDGT…SSVI), 697–728 (PNEN…EKGN), and 817–871 (VTYK…EKDN). Residues 286–295 (SQDHRFVPAT) show a composition bias toward basic and acidic residues. Residues 497 to 509 (EDDDSSSGEEMEW) are compositionally biased toward acidic residues. Composition is skewed to polar residues over residues 533–548 (DNPL…SSVI) and 699–728 (ENTL…EKGN). The span at 828–838 (SRLKLNKRKLA) shows a compositional bias: basic residues. Residues 842 to 854 (ETSTKSSETGSTK) are compositionally biased toward low complexity. The span at 855–866 (DNFIQNNPCNSN) shows a compositional bias: polar residues. Position 1030 is a phosphoserine (S1030). 3 disordered regions span residues 1035–1095 (YPIY…YNAE), 1162–1231 (SRIG…DEKI), and 1537–1600 (RQQK…KLLK). Residue T1041 is modified to Phosphothreonine. Composition is skewed to basic residues over residues 1043 to 1061 (KKSH…KTGK) and 1166 to 1179 (KTSR…KSKA). A compositionally biased stretch (basic and acidic residues) spans 1213–1231 (KTNEKGTSRKHTTLKDEKI). Residues 1540–1565 (KAQNANTTQDPLSNKHQPNKNISGSL) show a composition bias toward polar residues. Positions 1570 to 1589 (ANKRTRSVTSPRKPRTPRST) are enriched in basic residues. The segment covering 1590–1600 (KQKEKIPKLLK) has biased composition (basic and acidic residues). At S1724 the chain carries Phosphoserine. Disordered regions lie at residues 1845–1882 (NDML…KPLM), 1962–1984 (NPRP…SNSP), 2017–2050 (ERSK…PVVP), 2080–2150 (PTTG…SPVE), and 2216–2236 (APGL…NKKG). The mediates interaction with MAD2L2 stretch occupies residues 1847 to 1898 (MLTPTPDSSPRSTSSPSQSKNGSFTPRTANILKPLMSPPSREEIMATLLDHD). The span at 1849–1865 (TPTPDSSPRSTSSPSQS) shows a compositional bias: low complexity. S1967 is modified (phosphoserine). A compositionally biased stretch (polar residues) spans 2080–2092 (PTTGCSQTASESQ). A compositionally biased stretch (low complexity) spans 2113–2122 (YYISYSSPDS). Over residues 2221–2236 (PLSTEPKTQKLSNKKG) the composition is skewed to polar residues. Positions 3042, 3045, 3054, and 3057 each coordinate Zn(2+). Residues 3042–3057 (CPVCDDLTQHGICSKC) form a CysA-type zinc finger. 4 residues coordinate [4Fe-4S] cluster: C3086, C3089, C3099, and C3104. A CysB motif motif is present at residues 3086–3104 (CKNCTGCFDRHIPCVSLNC).

This sequence belongs to the DNA polymerase type-B family. As to quaternary structure, heterodimer with MAD2L2. This dimer forms the minimal DNA polymerase zeta complex (Pol-zeta2), with REV3L bearing DNA polymerase catalytic activity, although its activity is very low in this context. Component of the tetrameric Pol-zeta complex (Pol-zeta4), which consists of REV3L, MAD2L2, POLD2 and POLD3; Pol-zeta4 is the fully active form of DNA polymerase zeta. [4Fe-4S] cluster serves as cofactor. In terms of tissue distribution, ubiquitously expressed.

The protein localises to the nucleus. It carries out the reaction DNA(n) + a 2'-deoxyribonucleoside 5'-triphosphate = DNA(n+1) + diphosphate. Functionally, catalytic subunit of the DNA polymerase zeta complex, an error-prone polymerase specialized in translesion DNA synthesis (TLS). Lacks an intrinsic 3'-5' exonuclease activity and thus has no proofreading function. The chain is DNA polymerase zeta catalytic subunit (REV3L) from Homo sapiens (Human).